Reading from the N-terminus, the 295-residue chain is Methionine aminopeptidase (295 aa).

Residue H62 participates in substrate binding. A divalent metal cation is bound by residues D82, D93, and H153. H161 provides a ligand contact to substrate. A divalent metal cation contacts are provided by E187 and E280.

As to quaternary structure, monomer. The cofactor is Co(2+). It depends on Zn(2+) as a cofactor. Mn(2+) serves as cofactor. Requires Fe(2+) as cofactor.

The catalysed reaction is Release of N-terminal amino acids, preferentially methionine, from peptides and arylamides.. Removes the N-terminal methionine from nascent proteins. The N-terminal methionine is often cleaved when the second residue in the primary sequence is small and uncharged (Met-Ala-, Cys, Gly, Pro, Ser, Thr, or Val). This chain is Methionine aminopeptidase, found in Pyrococcus furiosus (strain ATCC 43587 / DSM 3638 / JCM 8422 / Vc1).